A 91-amino-acid chain; its full sequence is Probable Fe(2+)-trafficking protein (91 aa).

Belongs to the Fe(2+)-trafficking protein family.

In terms of biological role, could be a mediator in iron transactions between iron acquisition and iron-requiring processes, such as synthesis and/or repair of Fe-S clusters in biosynthetic enzymes. This is Probable Fe(2+)-trafficking protein from Histophilus somni (strain 129Pt) (Haemophilus somnus).